A 358-amino-acid polypeptide reads, in one-letter code: tRNA-specific 2-thiouridylase MnmA (358 aa).

ATP contacts are provided by residues 8–15 (AMSGGVDS) and methionine 35. The segment at 95-97 (NPD) is interaction with target base in tRNA. Catalysis depends on cysteine 100, which acts as the Nucleophile. Cysteines 100 and 194 form a disulfide. Glycine 124 serves as a coordination point for ATP. The tract at residues 144–146 (KDQ) is interaction with tRNA. Cysteine 194 (cysteine persulfide intermediate) is an active-site residue. Positions 301-302 (RY) are interaction with tRNA.

It belongs to the MnmA/TRMU family.

The protein localises to the cytoplasm. The enzyme catalyses S-sulfanyl-L-cysteinyl-[protein] + uridine(34) in tRNA + AH2 + ATP = 2-thiouridine(34) in tRNA + L-cysteinyl-[protein] + A + AMP + diphosphate + H(+). In terms of biological role, catalyzes the 2-thiolation of uridine at the wobble position (U34) of tRNA, leading to the formation of s(2)U34. The chain is tRNA-specific 2-thiouridylase MnmA from Chlamydia trachomatis serovar D (strain ATCC VR-885 / DSM 19411 / UW-3/Cx).